The sequence spans 253 residues: MSIEIHASAKNLNLWYDSNQVLHNISLDIYKREVTAFIGPSGCGKSTFLRCFNRMNDFVSNCKIKGELIIENIDVCSVNTNVVLLRAKVGMVFQKPNPFPKSIYDNVAYGPKLHGLAKNKKKLDEIVEKSLTSVGLWEELSDRLKDNAFELSGGQQQRLCIARAIAVKPTMLLMDEPCSALDPFATSVIENLIQNLKKNFTIIVVTHSMKQARKVSDKVAFFESGKLIEYNTTDEIFKNPQSSKTKRYIVDHL.

Residues 7–249 (ASAKNLNLWY…PQSSKTKRYI (243 aa)) form the ABC transporter domain. 39–46 (GPSGCGKS) provides a ligand contact to ATP.

Belongs to the ABC transporter superfamily. Phosphate importer (TC 3.A.1.7) family. As to quaternary structure, the complex is composed of two ATP-binding proteins (PstB), two transmembrane proteins (PstC and PstA) and a solute-binding protein (PstS).

The protein resides in the cell inner membrane. The enzyme catalyses phosphate(out) + ATP + H2O = ADP + 2 phosphate(in) + H(+). Its function is as follows. Part of the ABC transporter complex PstSACB involved in phosphate import. Responsible for energy coupling to the transport system. This chain is Phosphate import ATP-binding protein PstB, found in Ehrlichia ruminantium (strain Gardel).